Reading from the N-terminus, the 141-residue chain is Large ribosomal subunit protein uL22 (141 aa).

Belongs to the universal ribosomal protein uL22 family. In terms of assembly, part of the 50S ribosomal subunit.

This protein binds specifically to 23S rRNA; its binding is stimulated by other ribosomal proteins, e.g. L4, L17, and L20. It is important during the early stages of 50S assembly. It makes multiple contacts with different domains of the 23S rRNA in the assembled 50S subunit and ribosome. In terms of biological role, the globular domain of the protein is located near the polypeptide exit tunnel on the outside of the subunit, while an extended beta-hairpin is found that lines the wall of the exit tunnel in the center of the 70S ribosome. This is Large ribosomal subunit protein uL22 from Frankia casuarinae (strain DSM 45818 / CECT 9043 / HFP020203 / CcI3).